The following is a 1416-amino-acid chain: DNA-directed RNA polymerase subunit beta' (1416 aa).

4 residues coordinate Zn(2+): Cys-68, Cys-70, Cys-83, and Cys-86. 3 residues coordinate Mg(2+): Asp-458, Asp-460, and Asp-462. The Zn(2+) site is built by Cys-811, Cys-884, Cys-891, and Cys-894.

Belongs to the RNA polymerase beta' chain family. The RNAP catalytic core consists of 2 alpha, 1 beta, 1 beta' and 1 omega subunit. When a sigma factor is associated with the core the holoenzyme is formed, which can initiate transcription. Mg(2+) serves as cofactor. Zn(2+) is required as a cofactor.

It catalyses the reaction RNA(n) + a ribonucleoside 5'-triphosphate = RNA(n+1) + diphosphate. Its function is as follows. DNA-dependent RNA polymerase catalyzes the transcription of DNA into RNA using the four ribonucleoside triphosphates as substrates. This chain is DNA-directed RNA polymerase subunit beta', found in Francisella philomiragia subsp. philomiragia (strain ATCC 25017 / CCUG 19701 / FSC 153 / O#319-036).